The chain runs to 725 residues: Ribonuclease Y (725 aa).

The chain crosses the membrane as a helical span at residues 4 to 24; that stretch reads VLVILLSLVLLVLVALILAVA. 3 disordered regions span residues 62–140, 165–195, and 300–321; these read DGPA…ASDT, VAAT…SVRR, and EQRV…AGRE. Composition is skewed to low complexity over residues 84-100 and 114-137; these read DAPG…PDAG and AAAP…PADA. The 67-residue stretch at 415 to 481 folds into the KH domain; it reads VVTVLHLPGD…RITLAALVSD (67 aa). The 94-residue stretch at 541-634 folds into the HD domain; the sequence is VLAHLIESAH…TQAADQISGG (94 aa).

This sequence belongs to the RNase Y family.

The protein resides in the cell membrane. Its function is as follows. Endoribonuclease that initiates mRNA decay. This Frankia alni (strain DSM 45986 / CECT 9034 / ACN14a) protein is Ribonuclease Y.